The chain runs to 117 residues: Large ribosomal subunit protein bL20 (117 aa).

The protein belongs to the bacterial ribosomal protein bL20 family.

Functionally, binds directly to 23S ribosomal RNA and is necessary for the in vitro assembly process of the 50S ribosomal subunit. It is not involved in the protein synthesizing functions of that subunit. The sequence is that of Large ribosomal subunit protein bL20 from Campylobacter hominis (strain ATCC BAA-381 / DSM 21671 / CCUG 45161 / LMG 19568 / NCTC 13146 / CH001A).